The chain runs to 393 residues: Homoserine O-succinyltransferase (393 aa).

The AB hydrolase-1 domain occupies 62-372; that stretch reads NAVLVCHALN…PHGHDAFLLD (311 aa). The active-site Nucleophile is the Ser-168. Residue Arg-238 coordinates substrate. Catalysis depends on residues Asp-333 and His-366. Asp-367 is a binding site for substrate.

The protein belongs to the AB hydrolase superfamily. MetX family. In terms of assembly, homodimer.

The protein resides in the cytoplasm. It carries out the reaction L-homoserine + succinyl-CoA = O-succinyl-L-homoserine + CoA. It participates in amino-acid biosynthesis; L-methionine biosynthesis via de novo pathway; O-succinyl-L-homoserine from L-homoserine: step 1/1. Its function is as follows. Transfers a succinyl group from succinyl-CoA to L-homoserine, forming succinyl-L-homoserine. The sequence is that of Homoserine O-succinyltransferase from Cupriavidus taiwanensis (strain DSM 17343 / BCRC 17206 / CCUG 44338 / CIP 107171 / LMG 19424 / R1) (Ralstonia taiwanensis (strain LMG 19424)).